A 451-amino-acid polypeptide reads, in one-letter code: Sex peptide receptor-related protein 2 (451 aa).

Topologically, residues 1 to 63 are extracellular; sequence MNYEVYCGNA…DNLEIVVYGQ (63 aa). N-linked (GlcNAc...) asparagine glycosylation occurs at Asn-15. The chain crosses the membrane as a helical span at residues 64–84; sequence IFPILVLFAVFANAAVALVLS. At 85 to 97 the chain is on the cytoplasmic side; sequence KKHMITPTNVVLK. A helical transmembrane segment spans residues 98–118; that stretch reads YMAIAELLVGLVPLPWTLFFF. At 119–140 the chain is on the extracellular side; it reads SMGNIKETHRLELWWCYLQKYS. An intrachain disulfide couples Cys-134 to Cys-225. A helical transmembrane segment spans residues 141–161; that stretch reads MDAFPPVFHMIAMWLTVLLAA. Residues 162-183 are Cytoplasmic-facing; that stretch reads QRYVSISHPLHSRSACNVKNVR. A helical transmembrane segment spans residues 184–204; it reads LATMIITVTSFLCGLPKSFDY. Topologically, residues 205–251 are extracellular; sequence EYETVHGWIYSHGNWTYASSCVMMPTAILTNMGQTVYFNIYFWTRAL. Asn-218 carries N-linked (GlcNAc...) asparagine glycosylation. The chain crosses the membrane as a helical span at residues 252 to 272; it reads GFIILPSFLLVLLNGLLIKGI. Topologically, residues 273–301 are cytoplasmic; the sequence is RRAQRRKLRLLREKRSEEAARQRDSNSTS. Residues 302–322 form a helical membrane-spanning segment; sequence LMLVAIVSIFLIVNLPQAIFM. Topologically, residues 323-334 are extracellular; that stretch reads GLLCVCETFTIK. Residues 335–355 form a helical membrane-spanning segment; it reads IPILEGTFPAVFLIASNMIVI. Over 356-451 the chain is Cytoplasmic; the sequence is ATYPINFGIY…TQFTTMDRSD (96 aa).

This sequence belongs to the G-protein coupled receptor 1 family. In terms of tissue distribution, expressed in head neurons including the ASE sensory neurons and the ASI and AWB chemosensory neurons, the midbody neurons SDQ, and motor neurons in the tail.

The protein resides in the cell membrane. G-protein coupled receptor for the neuropeptide like protein nlp-38. Plays a role in several types of aversive gustatory associative learning including gustatory plasticity and salt avoidance learning. Its role in salt avoidance learning may be through activation of the transcription factor crh-1/CREB and de novo transcription and translation, which in turn promotes the formation of long-term memory. This chain is Sex peptide receptor-related protein 2, found in Caenorhabditis elegans.